The chain runs to 296 residues: Glycine--tRNA ligase alpha subunit (296 aa).

This sequence belongs to the class-II aminoacyl-tRNA synthetase family. In terms of assembly, tetramer of two alpha and two beta subunits.

The protein localises to the cytoplasm. It carries out the reaction tRNA(Gly) + glycine + ATP = glycyl-tRNA(Gly) + AMP + diphosphate. The chain is Glycine--tRNA ligase alpha subunit from Exiguobacterium sibiricum (strain DSM 17290 / CCUG 55495 / CIP 109462 / JCM 13490 / 255-15).